Reading from the N-terminus, the 68-residue chain is KCNQ1 downstream neighbor protein (68 aa).

The interval 28–68 is disordered; the sequence is GVASGCSPSKASQEARGKEKCPTLNGQPQWSALFTLPPQRE.

In terms of tissue distribution, shows reduced expression in Wilms' tumor samples.

The chain is KCNQ1 downstream neighbor protein (KCNQ1DN) from Homo sapiens (Human).